Here is a 169-residue protein sequence, read N- to C-terminus: Ubiquitin-fold modifier-conjugating enzyme 1 (169 aa).

The Glycyl thioester intermediate role is filled by C116.

The protein belongs to the ubiquitin-conjugating enzyme family. UFC1 subfamily.

In terms of biological role, E2-like enzyme which forms an intermediate with UFM1 via a thioester linkage. This chain is Ubiquitin-fold modifier-conjugating enzyme 1, found in Branchiostoma floridae (Florida lancelet).